We begin with the raw amino-acid sequence, 215 residues long: Beta-crystallin A3-1 (215 aa).

Residues 1-30 (MEIPVDQTEREDITSEKMAQINPLPVHLGP) form an N-terminal arm region. 2 Beta/gamma crystallin 'Greek key' domains span residues 31-70 (WKIT…KVEC) and 71-117 (GAWI…RPIC). Residues 118–123 (SANHIE) are connecting peptide. 2 Beta/gamma crystallin 'Greek key' domains span residues 124 to 165 (SKLV…KVQC) and 166 to 214 (GAWV…RRIQ).

The protein belongs to the beta/gamma-crystallin family. As to quaternary structure, homo/heterodimer, or complexes of higher-order. The structure of beta-crystallin oligomers seems to be stabilized through interactions between the N-terminal arms. Post-translationally, the N-terminus is blocked.

Crystallins are the dominant structural components of the vertebrate eye lens. This chain is Beta-crystallin A3-1, found in Aquarana catesbeiana (American bullfrog).